Here is a 218-residue protein sequence, read N- to C-terminus: MKIFLDTANLEEIKKGVEWGIVDGVTTNPTLISKEGAEFKQRVKEICDLVKGPVSAEVVSLDYEGMVREARELAQISEYVVIKIPMTPDGIKAVKTLSAEGIKTNVTLVFSPAQAILAAKAGATYVSPFVGRMDDLSNDGMRMLGEIVEIYNNYGFETEIIAASIRHPMHVVEAALMGVDIVTMPFAVLEKLFKHPMTDLGIERFMEDWKKYLENLKK.

Lys-83 functions as the Schiff-base intermediate with substrate in the catalytic mechanism.

The protein belongs to the transaldolase family. Type 3B subfamily.

The protein resides in the cytoplasm. It carries out the reaction D-sedoheptulose 7-phosphate + D-glyceraldehyde 3-phosphate = D-erythrose 4-phosphate + beta-D-fructose 6-phosphate. The protein operates within carbohydrate degradation; pentose phosphate pathway; D-glyceraldehyde 3-phosphate and beta-D-fructose 6-phosphate from D-ribose 5-phosphate and D-xylulose 5-phosphate (non-oxidative stage): step 2/3. Its function is as follows. Transaldolase is important for the balance of metabolites in the pentose-phosphate pathway. Does not show fructose-6-P aldolase activity. The polypeptide is Transaldolase (tal) (Thermotoga maritima (strain ATCC 43589 / DSM 3109 / JCM 10099 / NBRC 100826 / MSB8)).